Consider the following 326-residue polypeptide: L-threo-3-hydroxyaspartate ammonia-lyase (326 aa).

An N6-(pyridoxal phosphate)lysine modification is found at Lys-53. Pyridoxal 5'-phosphate-binding positions include Asn-80, 179–183 (GGGGL), and Ser-304.

Belongs to the serine/threonine dehydratase family. As to quaternary structure, monomer. Pyridoxal 5'-phosphate serves as cofactor. Mn(2+) is required as a cofactor. Requires Mg(2+) as cofactor. It depends on Ca(2+) as a cofactor.

It catalyses the reaction (3S)-3-hydroxy-L-aspartate = oxaloacetate + NH4(+). Is strongly inhibited by hydroxylamine and EDTA in vitro. Its function is as follows. Catalyzes the deamination of L-threo-3-hydroxyaspartate to oxaloacetate and ammonia. Shows a high specificity towards L-threo-3-hydroxyaspartate as other 3-hydroxyaminoacids, i.e. D,L-erythro- and D-threo-3-hydroxyaspartate, D-threonine, L-threonine, D,L-allothreonine, D-serine, and L-serine, are not substrates for this enzyme. Exhibits no detectable serine racemase activity. Is responsible for the 3-hydroxyaspartate resistance of S.cerevisiae, and thus may be involved in the detoxification of naturally occurring 3-hydroxyaspartate. The protein is L-threo-3-hydroxyaspartate ammonia-lyase (SRY1) of Saccharomyces cerevisiae (strain ATCC 204508 / S288c) (Baker's yeast).